We begin with the raw amino-acid sequence, 240 residues long: Probable transcriptional regulatory protein HPP12_0160 (240 aa).

The protein belongs to the TACO1 family.

The protein resides in the cytoplasm. The protein is Probable transcriptional regulatory protein HPP12_0160 of Helicobacter pylori (strain P12).